The sequence spans 510 residues: Fumarate hydratase, mitochondrial (510 aa).

The transit peptide at 1-44 (MYRALWLLARSRRLVRPPASALASAPGLSGAAVPSFWPPNAARM) directs the protein to the mitochondrion. An N6-acetyllysine; alternate mark is found at lysine 61, lysine 66, and lysine 80. N6-succinyllysine; alternate occurs at positions 61, 66, and 80. A phosphothreonine mark is found at threonine 85 and threonine 90. N6-acetyllysine is present on lysine 94. N6-acetyllysine; alternate occurs at positions 115 and 122. 2 positions are modified to N6-succinyllysine; alternate: lysine 115 and lysine 122. Substrate-binding positions include 145-147 (SGT), 176-179 (HPND), and 186-188 (SSN). The residue at position 213 (lysine 213) is an N6-acetyllysine. The residue at position 223 (lysine 223) is an N6-acetyllysine; alternate. Position 223 is an N6-succinyllysine; alternate (lysine 223). Threonine 234 is a substrate binding site. Catalysis depends on histidine 235, which acts as the Proton donor/acceptor. A Phosphothreonine modification is found at threonine 236. Lysine 256 is subject to N6-acetyllysine. Lysine 292 is subject to N6-acetyllysine; alternate. Position 292 is an N6-succinyllysine; alternate (lysine 292). Serine 365 is an active-site residue. Residues serine 366 and 371 to 373 (KVN) each bind substrate. At serine 366 the chain carries Phosphoserine. An N6-succinyllysine mark is found at lysine 467 and lysine 473. Position 502 is an N6-acetyllysine (lysine 502).

Belongs to the class-II fumarase/aspartase family. Fumarase subfamily. As to quaternary structure, homotetramer. Interacts with H2AZ1. Post-translationally, phosphorylation at Thr-236 by PRKDC in response to DNA damage promotes translocation to the nucleus and recruitment to DNA double-strand breaks (DSBs).

It localises to the mitochondrion. Its subcellular location is the cytoplasm. The protein localises to the cytosol. The protein resides in the nucleus. It is found in the chromosome. It carries out the reaction (S)-malate = fumarate + H2O. It functions in the pathway carbohydrate metabolism; tricarboxylic acid cycle; (S)-malate from fumarate: step 1/1. Functionally, catalyzes the reversible stereospecific interconversion of fumarate to L-malate. Experiments in other species have demonstrated that specific isoforms of this protein act in defined pathways and favor one direction over the other. In terms of biological role, catalyzes the hydration of fumarate to L-malate in the tricarboxylic acid (TCA) cycle to facilitate a transition step in the production of energy in the form of NADH. Catalyzes the dehydration of L-malate to fumarate. Fumarate metabolism in the cytosol plays a role during urea cycle and arginine metabolism; fumarate being a by-product of the urea cycle and amino-acid catabolism. Also plays a role in DNA repair by promoting non-homologous end-joining (NHEJ). In response to DNA damage and phosphorylation by PRKDC, translocates to the nucleus and accumulates at DNA double-strand breaks (DSBs): acts by catalyzing formation of fumarate, an inhibitor of KDM2B histone demethylase activity, resulting in enhanced dimethylation of histone H3 'Lys-36' (H3K36me2). The protein is Fumarate hydratase, mitochondrial of Macaca fascicularis (Crab-eating macaque).